The sequence spans 122 residues: MIQPQSHLNVADNSGARELMCIRIIGASNRRYAHIGDIIVAVIKEALPNTPLERSEVIRAVIVRTCKELKRDNGMIIRYDDNAAVVIDQEGNPKGTRVFGAIARELRQLNFTKIVSLAPEVL.

It belongs to the universal ribosomal protein uL14 family. Part of the 50S ribosomal subunit.

The protein localises to the plastid. It localises to the chloroplast. Its function is as follows. Binds to 23S rRNA. In Eucalyptus globulus subsp. globulus (Tasmanian blue gum), this protein is Large ribosomal subunit protein uL14c.